The sequence spans 260 residues: Manganese transport system ATP-binding protein MntA (260 aa).

One can recognise an ABC transporter domain in the interval 10-245; sequence ISVDGVSVTY…NLELTFGGLP (236 aa). ATP is bound at residue 43 to 50; sequence GPNGSGKS.

It belongs to the ABC transporter superfamily.

Part of an ATP-driven transport system for manganese. This chain is Manganese transport system ATP-binding protein MntA (mntA), found in Synechocystis sp. (strain ATCC 27184 / PCC 6803 / Kazusa).